We begin with the raw amino-acid sequence, 182 residues long: Large ribosomal subunit protein uL6 (182 aa).

Belongs to the universal ribosomal protein uL6 family. In terms of assembly, part of the 50S ribosomal subunit.

This protein binds to the 23S rRNA, and is important in its secondary structure. It is located near the subunit interface in the base of the L7/L12 stalk, and near the tRNA binding site of the peptidyltransferase center. The chain is Large ribosomal subunit protein uL6 from Caldicellulosiruptor bescii (strain ATCC BAA-1888 / DSM 6725 / KCTC 15123 / Z-1320) (Anaerocellum thermophilum).